A 417-amino-acid polypeptide reads, in one-letter code: MLKKDMNIADYDPELFNAIQNETLRQEEHIELIASENYTSPRVMEAQGSQLTNKYAEGYPGKRYYGGCEYVDVVETLAIERAKQLFGATYANVQPHSGSQANSAVYMALLKPGDTVLGMNLAHGGHLTHGSPVNFSGKLYNIIPYGIDESGKIDYDEMERIAIEHKPKMMIGGFSAYSGIVDWAKMREIADKIGAYLFVDMAHVAGLIAAGVYPNPVPHAHVVTSTTHKTLAGPRGGVILSAADDEELYKKLNSAVFPGGQGGPLMHVIAGKAVAFKEALEPEFKVYQQQVVNNAKAMVEVFLERGYKIVSGGTSNHLMLVDLIGRDLTGKEADAALGSANITVNKNSVPNDPRSPFVTSGVRIGTPAITRRGFKEAEAKQLTGWICDILDDAHNPAVIERVKGQVLALCARFPVYG.

Residues Leu121 and 125–127 (GHL) contribute to the (6S)-5,6,7,8-tetrahydrofolate site. Lys229 carries the N6-(pyridoxal phosphate)lysine modification. 355–357 (SPF) serves as a coordination point for (6S)-5,6,7,8-tetrahydrofolate.

Belongs to the SHMT family. Homodimer. Pyridoxal 5'-phosphate is required as a cofactor.

It localises to the cytoplasm. The enzyme catalyses (6R)-5,10-methylene-5,6,7,8-tetrahydrofolate + glycine + H2O = (6S)-5,6,7,8-tetrahydrofolate + L-serine. It participates in one-carbon metabolism; tetrahydrofolate interconversion. It functions in the pathway amino-acid biosynthesis; glycine biosynthesis; glycine from L-serine: step 1/1. In terms of biological role, catalyzes the reversible interconversion of serine and glycine with tetrahydrofolate (THF) serving as the one-carbon carrier. This reaction serves as the major source of one-carbon groups required for the biosynthesis of purines, thymidylate, methionine, and other important biomolecules. Also exhibits THF-independent aldolase activity toward beta-hydroxyamino acids, producing glycine and aldehydes, via a retro-aldol mechanism. The sequence is that of Serine hydroxymethyltransferase from Shewanella putrefaciens (strain CN-32 / ATCC BAA-453).